We begin with the raw amino-acid sequence, 476 residues long: UDP-N-acetylmuramate--L-alanine ligase (476 aa).

115–121 serves as a coordination point for ATP; that stretch reads GTHGKTT.

The protein belongs to the MurCDEF family.

Its subcellular location is the cytoplasm. It catalyses the reaction UDP-N-acetyl-alpha-D-muramate + L-alanine + ATP = UDP-N-acetyl-alpha-D-muramoyl-L-alanine + ADP + phosphate + H(+). It functions in the pathway cell wall biogenesis; peptidoglycan biosynthesis. In terms of biological role, cell wall formation. In Paramagnetospirillum magneticum (strain ATCC 700264 / AMB-1) (Magnetospirillum magneticum), this protein is UDP-N-acetylmuramate--L-alanine ligase.